A 496-amino-acid chain; its full sequence is RNA-binding motif protein, Y chromosome, family 1 member A1 (496 aa).

Residues 8–85 (GKLFIGGLNR…KAIKVEQAKK (78 aa)) form the RRM domain. 2 disordered regions span residues 78–349 (IKVE…HRDY) and 452–496 (KDQR…SSRY). Low complexity-rich tracts occupy residues 97-114 (PASS…SARG) and 149-159 (PVKRGPSSRSG). The segment covering 175 to 184 (NSWMGSQGPM) has biased composition (polar residues). Basic and acidic residues-rich tracts occupy residues 204 to 214 (RNDRMSTRHDG), 242 to 253 (DNGHSNRDEHSS), 276 to 289 (AYRD…DESY), 313 to 326 (GYRD…HESY), 335 to 349 (SSRE…HRDY), and 484 to 496 (GESR…SSRY).

As to quaternary structure, interacts with splicing factor proteins SFRS3/SRP20, TRA2B/SFRS10, KHDRBS1/SAM68 and KHDRBS3. In terms of tissue distribution, testis-specific.

The protein resides in the nucleus. RNA-binding protein involved in pre-mRNA splicing. Required for sperm development. Acts additively with TRA2B to promote exon 7 inclusion of the survival motor neuron SMN. Binds non-specifically to mRNAs. The polypeptide is RNA-binding motif protein, Y chromosome, family 1 member A1 (RBMY1A1) (Homo sapiens (Human)).